Consider the following 427-residue polypeptide: Stabilizer of axonemal microtubules 4 (427 aa).

Disordered stretches follow at residues 82-105, 273-298, and 314-335; these read TSKS…PLPW, RTLN…QPPQ, and GNKE…SYEQ. 2 stretches are compositionally biased toward polar residues: residues 287–298 and 321–332; these read ASMSHRSYQPPQ and FTLNNPSYVRSS.

In terms of assembly, microtubule inner protein component of sperm flagellar doublet microtubules. Interacts with PPP1CA.

The protein localises to the cell projection. Its subcellular location is the cilium. The protein resides in the cytoplasm. It localises to the cytoskeleton. It is found in the flagellum axoneme. The sequence is that of Stabilizer of axonemal microtubules 4 from Mus musculus (Mouse).